A 603-amino-acid polypeptide reads, in one-letter code: MTDVPVSRIRNFSIIAHIDHGKSTLADRLLQVTDTVQQREMKEQFLDNMDLERERGITIKLQAARMNYKAKDGQDYVLNLIDTPGHVDFSYEVSRSLAACEGALLVVDASQGVEAQTLANVYLALDNNLEIIPVLNKIDLPSAEPDRVAAEIEEVVGLDCSDIIQASAKAGIGVDDILEAIVQQVPPPADTVDQPLRALIFDSYYDAYRGVVVYFRVMDGQVKKGDKVRLMASDKEYVIDELGVLSPTQVQVEALHAGEVGYFAAAIKAVADARVGDTITMANSPAAEPLPGYTEANPMVFCGLFPIDADQYPDLKDALEKLKLNDAALSYEPETSSAMGFGFRCGFLGLLHMEIVQERLEREYNLDLITTAPSVIYRVTTTDEEVIEVDNPSLLPPIQKRLKVEEPFIKVEMITPETYVGTLMELCQSRRGVFKDMKFFTQTRTALIYELPLAEVVTDFFDQLKSRTKGYASMEYQLIGYRENPLVKLDILVNGDGVDALAMIVHRDKAYYVGRAMVSKLKELIPRHQFKVPIQAAIGAKVIASEHIPALRKDVLAKCYGGDISRKKKLLQKQAKGKKRMKAIGTVDVPQEAFMAVLKLDPQ.

Residues 7-189 enclose the tr-type G domain; sequence SRIRNFSIIA…AIVQQVPPPA (183 aa). Residues 19–24 and 136–139 contribute to the GTP site; these read DHGKST and NKID.

Belongs to the TRAFAC class translation factor GTPase superfamily. Classic translation factor GTPase family. LepA subfamily.

Its subcellular location is the cell inner membrane. The catalysed reaction is GTP + H2O = GDP + phosphate + H(+). Its function is as follows. Required for accurate and efficient protein synthesis under certain stress conditions. May act as a fidelity factor of the translation reaction, by catalyzing a one-codon backward translocation of tRNAs on improperly translocated ribosomes. Back-translocation proceeds from a post-translocation (POST) complex to a pre-translocation (PRE) complex, thus giving elongation factor G a second chance to translocate the tRNAs correctly. Binds to ribosomes in a GTP-dependent manner. In Synechocystis sp. (strain ATCC 27184 / PCC 6803 / Kazusa), this protein is Elongation factor 4.